A 1100-amino-acid polypeptide reads, in one-letter code: MASRARSEPPLEHRFYGGAESHAGHSSLVLTLFVVMLMTCLEAAKLTVGFHAPWNISHPFSVQRLGAGLQIAVDKLNSEPVGPGNLSWEFTYTNATCNAKESLAAFIDQVQREHISVLIGPACPEAAEVIGLLASEWDIPLFDFVGQMTALEDHFWCDTCVTLVPPKQEIGTVLRESLQYLGWEYIGVFGGSSAGSSWGEVNELWKAVEDELQLHFTITARVRYSSGHSDLLQEGLRSMSSVARVIILICSSEDAKHILQAAEDLGLNSGEFVFLLLQQLEDSFWKEVLAEDKVTRFPKVYESVFLIAPSTYGGSAGDDDFRKQVYQRLRRPPFQSSISSEDQVSPYSAYLHDALLLYAQTVEEMMKAEKDFRDGRQLISTLRADQVTLQGITGPVLLDAQGKRHMDYSVYALQKSGNGSRFLPFLHYDSFQKVIRPWRDDLNASGPHGSHPEYKPDCGFHEDLCRTKPPTGAGMTASVTAVIPTVTLLVVASAAAITGLMLWRLRGKVQNHPGDTWWQIHYDSITLLPQHKPSHRGTPMSRCNVSNASTVKISADCGSFAKTHQDEELFYAPVGLYQGNHVALCYIGEEAEARIKKPTVLREVWLMCELKHENIVPFFGVCTEPPNICIVTQYCKKGSLKDVLRNSDHEMDWIFKLSFVYDIVNGMLFLHGSPLRSHGNLKPSNCLVDSHMQLKLAGFGLWEFKHGSTCRIYNQEATDHSELYWTAPELLRLRELPWSGTPQGDVYSFAILLRDLIHQQAHGPFEDLEAAPEEIISCIKDPRAPVPLRPSLLEDKGDERIVALVRACWAESPEQRPAFPSIKKTLREASPRGRVSILDSMMGKLEMYASHLEEVVEERTCQLVAEKRKVEKLLSTMLPSFVGEQLIAGKSVEPEHFESVTIFFSDIVGFTKLCSLSSPLQVVKLLNDLYSLFDHTIQTHDVYKVETIGDAYMVASGLPIRNGAQHADEIATMSLHLLSVTTNFQIGHMPEERLKLRIGLHTGPVVAGVVGITMPRYCLFGDTVNMASRMESSSLPLRIHVSQSTARALLVAGGYHLQKRGTISVKGKGEQTTFWLTGKDGFAVPLPEFTEEEAKVPEIL.

The first 43 residues, 1 to 43 (MASRARSEPPLEHRFYGGAESHAGHSSLVLTLFVVMLMTCLEA), serve as a signal peptide directing secretion. The Extracellular segment spans residues 44-481 (AKLTVGFHAP…GAGMTASVTA (438 aa)). 5 N-linked (GlcNAc...) asparagine glycosylation sites follow: Asn55, Asn85, Asn94, Asn418, and Asn443. Residues 482-502 (VIPTVTLLVVASAAAITGLML) form a helical membrane-spanning segment. At 503–1100 (WRLRGKVQNH…EEEAKVPEIL (598 aa)) the chain is on the cytoplasmic side. Positions 549–826 (STVKISADCG…PAFPSIKKTL (278 aa)) constitute a Protein kinase domain. In terms of domain architecture, Guanylate cyclase spans 901-1031 (TIFFSDIVGF…DTVNMASRME (131 aa)).

Belongs to the adenylyl cyclase class-4/guanylyl cyclase family. Homooligomer. May interact with NPR1/GC-A. N-glycosylated. Expressed in lung, kidney and skeletal muscle. Low levels in intestine.

The protein resides in the cell membrane. It is found in the cytoplasm. The catalysed reaction is GTP = 3',5'-cyclic GMP + diphosphate. In Rattus norvegicus (Rat), this protein is Guanylate cyclase 2G (Gucy2g).